Reading from the N-terminus, the 380-residue chain is Gonadotropin-releasing hormone II receptor (380 aa).

Residues 1-40 are Extracellular-facing; sequence MSAVNGTPWGSSAREEVWAGSGVEVEGSELPTFSTAAKVR. A helical transmembrane segment spans residues 41-60; sequence VGVTIVLFVSSAGGNLAVLW. The Cytoplasmic segment spans residues 61–76; that stretch reads SVTRPQPSQLRPSPVR. A helical transmembrane segment spans residues 77 to 96; sequence RLFAHLAAADLLVTFVVMPL. Over 97–114 the chain is Extracellular; sequence DATWNITVQWLAGDIACR. The N-linked (GlcNAc...) asparagine glycan is linked to Asn101. Residues Cys113 and Cys188 are joined by a disulfide bond. A helical membrane pass occupies residues 115–136; it reads TLMFLKLMAMYAAAFLPVVIGL. Topologically, residues 137-160 are cytoplasmic; the sequence is DRQAAVLNPLGSRSGVRKLLGAAW. A helical membrane pass occupies residues 161–178; it reads GLSFLLALPQLFLFHTVH. Residues 179–204 lie on the Extracellular side of the membrane; that stretch reads RAGPVPFTQCATKGSFKARWQETTYN. The helical transmembrane segment at 205–224 threads the bilayer; sequence LFTFCCLFLLPLTAMAICYS. At 225 to 278 the chain is on the cytoplasmic side; that stretch reads RIVLGVSSPRTRKGSHAPAGEFALRRSFDNRPRVRLRALRLALLVLLTFILCWT. Residues 279 to 297 form a helical membrane-spanning segment; sequence PYYLLGLWYWFSPSMLSEV. Residues 298-303 lie on the Extracellular side of the membrane; that stretch reads PPSLSH. Residues 304–323 form a helical membrane-spanning segment; it reads ILFLFGLLNAPLDPLLYGAF. Topologically, residues 324-380 are cytoplasmic; it reads TLGCRRGHQELSMDSSREEGSRRMFQQDIQALRQTEVQKTVTSRKAGETKDIPITSI.

It belongs to the G-protein coupled receptor 1 family. In terms of processing, phosphorylated on the C-terminal cytoplasmic tail.

It is found in the cell membrane. In terms of biological role, receptor for gonadotropin releasing hormone II (GnRH II). This receptor mediates its action by association with G proteins that activate a phosphatidylinositol-calcium second messenger system. The sequence is that of Gonadotropin-releasing hormone II receptor (GNRHR2) from Callithrix jacchus (White-tufted-ear marmoset).